The chain runs to 388 residues: Succinate--CoA ligase [ADP-forming] subunit beta (388 aa).

One can recognise an ATP-grasp domain in the interval 9–244 (KEIFRSMGVA…LEEEDPKEIE (236 aa)). ATP is bound by residues Lys46, 53-55 (GRG), Glu99, Cys102, and Glu107. Mg(2+) contacts are provided by Asn199 and Asp213. Substrate contacts are provided by residues Asn264 and 321 to 323 (GIM).

Belongs to the succinate/malate CoA ligase beta subunit family. In terms of assembly, heterotetramer of two alpha and two beta subunits. The cofactor is Mg(2+).

It carries out the reaction succinate + ATP + CoA = succinyl-CoA + ADP + phosphate. It catalyses the reaction GTP + succinate + CoA = succinyl-CoA + GDP + phosphate. The protein operates within carbohydrate metabolism; tricarboxylic acid cycle; succinate from succinyl-CoA (ligase route): step 1/1. Functionally, succinyl-CoA synthetase functions in the citric acid cycle (TCA), coupling the hydrolysis of succinyl-CoA to the synthesis of either ATP or GTP and thus represents the only step of substrate-level phosphorylation in the TCA. The beta subunit provides nucleotide specificity of the enzyme and binds the substrate succinate, while the binding sites for coenzyme A and phosphate are found in the alpha subunit. The protein is Succinate--CoA ligase [ADP-forming] subunit beta of Staphylococcus haemolyticus (strain JCSC1435).